The chain runs to 190 residues: Potassium-transporting ATPase KdpC subunit (190 aa).

Residues 10-30 (TFIFLLLITGGVYPLLTTVLG) form a helical membrane-spanning segment.

The protein belongs to the KdpC family. The system is composed of three essential subunits: KdpA, KdpB and KdpC.

It localises to the cell inner membrane. Its function is as follows. Part of the high-affinity ATP-driven potassium transport (or Kdp) system, which catalyzes the hydrolysis of ATP coupled with the electrogenic transport of potassium into the cytoplasm. This subunit acts as a catalytic chaperone that increases the ATP-binding affinity of the ATP-hydrolyzing subunit KdpB by the formation of a transient KdpB/KdpC/ATP ternary complex. This Escherichia coli (strain K12 / MC4100 / BW2952) protein is Potassium-transporting ATPase KdpC subunit.